The chain runs to 238 residues: 7-cyano-7-deazaguanine synthase (238 aa).

Position 12–22 (12–22 (FSGGQDSGTCL)) interacts with ATP. Positions 200, 215, 218, and 221 each coordinate Zn(2+).

The protein belongs to the QueC family. Zn(2+) is required as a cofactor.

The catalysed reaction is 7-carboxy-7-deazaguanine + NH4(+) + ATP = 7-cyano-7-deazaguanine + ADP + phosphate + H2O + H(+). It functions in the pathway purine metabolism; 7-cyano-7-deazaguanine biosynthesis. In terms of biological role, catalyzes the ATP-dependent conversion of 7-carboxy-7-deazaguanine (CDG) to 7-cyano-7-deazaguanine (preQ(0)). The protein is 7-cyano-7-deazaguanine synthase of Lawsonia intracellularis (strain PHE/MN1-00).